Reading from the N-terminus, the 398-residue chain is Succinate--CoA ligase [ADP-forming] subunit beta (398 aa).

The region spanning 9–254 is the ATP-grasp domain; that stretch reads KALLKSFGAP…KTEEDAKEIE (246 aa). ATP-binding positions include K46, 53–55, E109, A112, and E117; that span reads GRG. Positions 209 and 223 each coordinate Mg(2+). Substrate contacts are provided by residues N274 and 331–333; that span reads GIM.

This sequence belongs to the succinate/malate CoA ligase beta subunit family. In terms of assembly, heterotetramer of two alpha and two beta subunits. It depends on Mg(2+) as a cofactor.

It carries out the reaction succinate + ATP + CoA = succinyl-CoA + ADP + phosphate. It catalyses the reaction GTP + succinate + CoA = succinyl-CoA + GDP + phosphate. It functions in the pathway carbohydrate metabolism; tricarboxylic acid cycle; succinate from succinyl-CoA (ligase route): step 1/1. Functionally, succinyl-CoA synthetase functions in the citric acid cycle (TCA), coupling the hydrolysis of succinyl-CoA to the synthesis of either ATP or GTP and thus represents the only step of substrate-level phosphorylation in the TCA. The beta subunit provides nucleotide specificity of the enzyme and binds the substrate succinate, while the binding sites for coenzyme A and phosphate are found in the alpha subunit. In Allorhizobium ampelinum (strain ATCC BAA-846 / DSM 112012 / S4) (Agrobacterium vitis (strain S4)), this protein is Succinate--CoA ligase [ADP-forming] subunit beta.